The chain runs to 1119 residues: DNA-directed RNA polymerase subunit beta (1119 aa).

The protein belongs to the RNA polymerase beta chain family. In terms of assembly, the RNAP catalytic core consists of 2 alpha, 1 beta, 1 beta' and 1 omega subunit. When a sigma factor is associated with the core the holoenzyme is formed, which can initiate transcription.

It carries out the reaction RNA(n) + a ribonucleoside 5'-triphosphate = RNA(n+1) + diphosphate. Its function is as follows. DNA-dependent RNA polymerase catalyzes the transcription of DNA into RNA using the four ribonucleoside triphosphates as substrates. The protein is DNA-directed RNA polymerase subunit beta of Thermus thermophilus (strain ATCC BAA-163 / DSM 7039 / HB27).